Reading from the N-terminus, the 67-residue chain is SPbeta prophage-derived uncharacterized protein YoqK (67 aa).

This is SPbeta prophage-derived uncharacterized protein YoqK (yoqK) from Bacillus subtilis (strain 168).